The following is a 324-amino-acid chain: Phospho-N-acetylmuramoyl-pentapeptide-transferase (324 aa).

The next 10 membrane-spanning stretches (helical) occupy residues 9 to 29, 53 to 73, 77 to 97, 117 to 137, 149 to 169, 176 to 196, 201 to 221, 227 to 247, 253 to 273, and 304 to 324; these read TFAV…PFLV, TMGA…FSFI, VSAA…LGFL, FLGQ…SDFA, IDLG…FSNA, LDGL…VIAF, MDVA…LLFN, IFMG…VSIL, LLLL…LQVF, and VLTF…VVIF.

Belongs to the glycosyltransferase 4 family. MraY subfamily. Mg(2+) serves as cofactor.

Its subcellular location is the cell membrane. It catalyses the reaction UDP-N-acetyl-alpha-D-muramoyl-L-alanyl-gamma-D-glutamyl-meso-2,6-diaminopimeloyl-D-alanyl-D-alanine + di-trans,octa-cis-undecaprenyl phosphate = di-trans,octa-cis-undecaprenyl diphospho-N-acetyl-alpha-D-muramoyl-L-alanyl-D-glutamyl-meso-2,6-diaminopimeloyl-D-alanyl-D-alanine + UMP. The protein operates within cell wall biogenesis; peptidoglycan biosynthesis. Functionally, catalyzes the initial step of the lipid cycle reactions in the biosynthesis of the cell wall peptidoglycan: transfers peptidoglycan precursor phospho-MurNAc-pentapeptide from UDP-MurNAc-pentapeptide onto the lipid carrier undecaprenyl phosphate, yielding undecaprenyl-pyrophosphoryl-MurNAc-pentapeptide, known as lipid I. The sequence is that of Phospho-N-acetylmuramoyl-pentapeptide-transferase from Listeria innocua serovar 6a (strain ATCC BAA-680 / CLIP 11262).